We begin with the raw amino-acid sequence, 323 residues long: tRNA dimethylallyltransferase (323 aa).

ATP is bound at residue G12–T19. T14–T19 is a substrate binding site. Interaction with substrate tRNA regions lie at residues D37 to L40 and Q161 to R165.

The protein belongs to the IPP transferase family. In terms of assembly, monomer. The cofactor is Mg(2+).

The enzyme catalyses adenosine(37) in tRNA + dimethylallyl diphosphate = N(6)-dimethylallyladenosine(37) in tRNA + diphosphate. Functionally, catalyzes the transfer of a dimethylallyl group onto the adenine at position 37 in tRNAs that read codons beginning with uridine, leading to the formation of N6-(dimethylallyl)adenosine (i(6)A). The chain is tRNA dimethylallyltransferase from Pseudomonas syringae pv. tomato (strain ATCC BAA-871 / DC3000).